The chain runs to 357 residues: S-adenosyl-L-methionine:benzoic acid/salicylic acid carboxyl methyltransferase 3 (357 aa).

Residue tyrosine 18 coordinates S-adenosyl-L-homocysteine. Glutamine 25 serves as a coordination point for benzoate. Residues cysteine 59, asparagine 64, aspartate 96, leucine 97, serine 135, and phenylalanine 136 each coordinate S-adenosyl-L-homocysteine. Tryptophan 157 contributes to the benzoate binding site. Mg(2+) is bound by residues asparagine 168, aspartate 254, phenylalanine 256, and asparagine 257. Glutamine 260 contributes to the benzoate binding site.

It belongs to the methyltransferase superfamily. Type-7 methyltransferase family.

It catalyses the reaction benzoate + S-adenosyl-L-methionine = methyl benzoate + S-adenosyl-L-homocysteine. The protein operates within aromatic compound metabolism. Its function is as follows. Converts benzoic acid into the volatile ester methyl benzoates. This scent, mostly produced in a rhythmical, diurnal manner, attracts the pollinators. In Petunia hybrida (Petunia), this protein is S-adenosyl-L-methionine:benzoic acid/salicylic acid carboxyl methyltransferase 3.